A 143-amino-acid chain; its full sequence is NADH-quinone oxidoreductase subunit A (143 aa).

Helical transmembrane passes span 7 to 27, 63 to 83, and 93 to 113; these read GFGN…GGYL, FYVV…LYPW, and FALF…AYAW.

It belongs to the complex I subunit 3 family. In terms of assembly, NDH-1 is composed of 14 different subunits. Subunits NuoA, H, J, K, L, M, N constitute the membrane sector of the complex.

The protein resides in the cell inner membrane. It catalyses the reaction a quinone + NADH + 5 H(+)(in) = a quinol + NAD(+) + 4 H(+)(out). Its function is as follows. NDH-1 shuttles electrons from NADH, via FMN and iron-sulfur (Fe-S) centers, to quinones in the respiratory chain. The immediate electron acceptor for the enzyme in this species is believed to be a menaquinone. Couples the redox reaction to proton translocation (for every two electrons transferred, four hydrogen ions are translocated across the cytoplasmic membrane), and thus conserves the redox energy in a proton gradient. This chain is NADH-quinone oxidoreductase subunit A, found in Chlorobium limicola (strain DSM 245 / NBRC 103803 / 6330).